Here is a 326-residue protein sequence, read N- to C-terminus: Tryptophan--tRNA ligase (326 aa).

ATP contacts are provided by residues 11 to 13 (QPT) and 19 to 20 (GN). Positions 12-20 (PTGQIHLGN) match the 'HIGH' region motif. Aspartate 135 contacts L-tryptophan. ATP-binding positions include 147-149 (GED), valine 186, and 195-199 (KMSKS). Residues 195-199 (KMSKS) carry the 'KMSKS' region motif.

It belongs to the class-I aminoacyl-tRNA synthetase family. As to quaternary structure, homodimer.

The protein resides in the cytoplasm. It catalyses the reaction tRNA(Trp) + L-tryptophan + ATP = L-tryptophyl-tRNA(Trp) + AMP + diphosphate + H(+). Its function is as follows. Catalyzes the attachment of tryptophan to tRNA(Trp). The sequence is that of Tryptophan--tRNA ligase from Helicobacter pylori (strain ATCC 700392 / 26695) (Campylobacter pylori).